Reading from the N-terminus, the 294-residue chain is Ventral anterior homeobox 2b (294 aa).

A compositionally biased stretch (basic and acidic residues) spans 1–10 (MGDGVSEERS). 5 disordered regions span residues 1 to 27 (MGDG…VRDR), 43 to 65 (KDIP…DSQS), 149 to 168 (RRTK…SSST), 190 to 223 (PAPP…PVIS), and 272 to 294 (SSAF…KSTS). A DNA-binding region (homeobox) is located at residues 98–157 (PKRTRTSFTAEQLYRLELEFQRCQYVVGRERTELARQLNLSETQVKVWFQNRRTKQKKDQ). The segment covering 154-165 (KKDQSRDSEKRS) has biased composition (basic and acidic residues). The span at 197–219 (SSQNNMGTSSGNGTSLGTSGSTS) shows a compositional bias: low complexity. Positions 279-288 (TRLDRKDTAS) are enriched in basic and acidic residues.

This sequence belongs to the EMX homeobox family.

It is found in the nucleus. In terms of biological role, transcription factor that may function in dorsoventral specification of the forebrain. Regulates the expression of Wnt signaling antagonists. This chain is Ventral anterior homeobox 2b (vax2-b), found in Xenopus laevis (African clawed frog).